Reading from the N-terminus, the 427-residue chain is Adenylosuccinate synthetase (427 aa).

GTP contacts are provided by residues 12–18 and 40–42; these read GDEGKGK and GHT. Asp13 serves as the catalytic Proton acceptor. Mg(2+)-binding residues include Asp13 and Gly40. IMP contacts are provided by residues 13–16, 38–41, Thr128, Arg142, Gln223, Thr238, and Arg302; these read DEGK and NAGH. His41 acts as the Proton donor in catalysis. Residue 298–304 coordinates substrate; that stretch reads VTTGRAR. Residues Arg304, 330-332, and 412-414 contribute to the GTP site; these read KLD and GVG.

The protein belongs to the adenylosuccinate synthetase family. Homodimer. The cofactor is Mg(2+).

The protein localises to the cytoplasm. It catalyses the reaction IMP + L-aspartate + GTP = N(6)-(1,2-dicarboxyethyl)-AMP + GDP + phosphate + 2 H(+). Its pathway is purine metabolism; AMP biosynthesis via de novo pathway; AMP from IMP: step 1/2. Plays an important role in the de novo pathway of purine nucleotide biosynthesis. Catalyzes the first committed step in the biosynthesis of AMP from IMP. The chain is Adenylosuccinate synthetase from Frankia alni (strain DSM 45986 / CECT 9034 / ACN14a).